The primary structure comprises 345 residues: NADPH dehydrogenase (345 aa).

23–26 (SPMC) is a binding site for FMN. Residue Tyr-28 participates in substrate binding. Positions 60 and 102 each coordinate FMN. 164 to 167 (HGAH) contacts substrate. Residues Arg-215 and 307–308 (GR) each bind FMN.

The protein belongs to the NADH:flavin oxidoreductase/NADH oxidase family. NamA subfamily. In terms of assembly, homotetramer. FMN serves as cofactor.

It carries out the reaction A + NADPH + H(+) = AH2 + NADP(+). In terms of biological role, catalyzes the reduction of the double bond of an array of alpha,beta-unsaturated aldehydes and ketones. It also reduces the nitro group of nitroester and nitroaromatic compounds. It could have a role in detoxification processes. This is NADPH dehydrogenase from Bacillus cereus (strain G9842).